Reading from the N-terminus, the 949-residue chain is Glycine dehydrogenase (decarboxylating) (949 aa).

Position 704 is an N6-(pyridoxal phosphate)lysine (Lys-704).

This sequence belongs to the GcvP family. In terms of assembly, the glycine cleavage system is composed of four proteins: P, T, L and H. Pyridoxal 5'-phosphate is required as a cofactor.

The catalysed reaction is N(6)-[(R)-lipoyl]-L-lysyl-[glycine-cleavage complex H protein] + glycine + H(+) = N(6)-[(R)-S(8)-aminomethyldihydrolipoyl]-L-lysyl-[glycine-cleavage complex H protein] + CO2. In terms of biological role, the glycine cleavage system catalyzes the degradation of glycine. The P protein binds the alpha-amino group of glycine through its pyridoxal phosphate cofactor; CO(2) is released and the remaining methylamine moiety is then transferred to the lipoamide cofactor of the H protein. The sequence is that of Glycine dehydrogenase (decarboxylating) from Bacteroides fragilis (strain ATCC 25285 / DSM 2151 / CCUG 4856 / JCM 11019 / LMG 10263 / NCTC 9343 / Onslow / VPI 2553 / EN-2).